The following is a 479-amino-acid chain: Muscarinic acetylcholine receptor M4 (479 aa).

The Extracellular segment spans residues 1 to 31; sequence MANFTPVNGSSGNQSVRLVTSSSHNRYETVE. Residues Asn8 and Asn13 are each glycosylated (N-linked (GlcNAc...) asparagine). Residues 32–54 traverse the membrane as a helical segment; the sequence is MVFIATVTGSLSLVTVVGNILVM. Topologically, residues 55-68 are cytoplasmic; that stretch reads LSIKVNRQLQTVNN. Residues 69 to 89 form a helical membrane-spanning segment; sequence YFLFSLACADLIIGAFSMNLY. The Extracellular segment spans residues 90-106; that stretch reads TVYIIKGYWPLGAVVCD. A disulfide bridge connects residues Cys105 and Cys185. Residues 107-128 form a helical membrane-spanning segment; that stretch reads LWLALDYVVSNASVMNLLIISF. At 129–148 the chain is on the cytoplasmic side; it reads DRYFCVTKPLTYPARRTTKM. The chain crosses the membrane as a helical span at residues 149-171; it reads AGLMIAAAWVLSFVLWAPAILFW. Over 172–193 the chain is Extracellular; that stretch reads QFVVGKRTVPDNQCFIQFLSNP. The chain crosses the membrane as a helical span at residues 194-216; the sequence is AVTFGTAIAAFYLPVVIMTVLYI. Topologically, residues 217-401 are cytoplasmic; that stretch reads HISLASRSRV…AARERKVTRT (185 aa). The segment at 271 to 333 is disordered; sequence KLEEAPPPAL…PAPPLQPRAL (63 aa). Over residues 275 to 286 the composition is skewed to pro residues; that stretch reads APPPALPPPPRP. Residues 294 to 304 are compositionally biased toward polar residues; that stretch reads NESSSGSATQN. A helical membrane pass occupies residues 402–422; it reads IFAILLAFILTWTPYNVMVLV. Residues 423–436 are Extracellular-facing; sequence NTFCQSCIPDTVWS. The helical transmembrane segment at 437–456 threads the bilayer; the sequence is IGYWLCYVNSTINPACYALC. The Cytoplasmic segment spans residues 457 to 479; the sequence is NATFKKTFRHLLLCQYRNIGTAR. Phosphothreonine occurs at positions 459, 463, and 477.

The protein belongs to the G-protein coupled receptor 1 family. Muscarinic acetylcholine receptor subfamily. CHRM4 sub-subfamily.

The protein resides in the cell membrane. The protein localises to the postsynaptic cell membrane. In terms of biological role, the muscarinic acetylcholine receptor mediates various cellular responses, including inhibition of adenylate cyclase, breakdown of phosphoinositides and modulation of potassium channels through the action of G proteins. Primary transducing effect is inhibition of adenylate cyclase. This is Muscarinic acetylcholine receptor M4 (CHRM4) from Homo sapiens (Human).